A 369-amino-acid polypeptide reads, in one-letter code: Sulfate permease 2, chloroplastic (369 aa).

Residues 1-21 form a disordered region; that stretch reads MASTTLLQPALGLPSRVGPRS. Residues 1 to 82 constitute a chloroplast transit peptide; that stretch reads MASTTLLQPA…QQSRGDLLVS (82 aa). The next 5 helical transmembrane spans lie at 110 to 130, 156 to 176, 187 to 207, 229 to 249, and 335 to 355; these read VGVAAAYIGLVVLVPFLNVFV, TLMLAFVTVPLNTVFGTVAAI, VFLMSLLDLPFSISPVVTGLM, VVFAFTGMALATMFVTLPFVV, and TEAAFAAAVLLSALALGTLWI. In terms of domain architecture, ABC transmembrane type-1 spans 153–356; that stretch reads LKMTLMLAFV…ALALGTLWIK (204 aa).

It belongs to the ATP-binding cassette (ABC) (TC 3.A.1) superfamily. Part of the chloroplast sulfate permease holocomplex. May form a heterodimer with SLUP1.

The protein localises to the plastid. Its subcellular location is the chloroplast membrane. Its function is as follows. Part of the ABC-type chloroplast envelope-localized sulfate transporter. This Chlamydomonas reinhardtii (Chlamydomonas smithii) protein is Sulfate permease 2, chloroplastic (SULP2).